The chain runs to 104 residues: Large ribosomal subunit protein uL24 (104 aa).

Belongs to the universal ribosomal protein uL24 family. In terms of assembly, part of the 50S ribosomal subunit.

Functionally, one of two assembly initiator proteins, it binds directly to the 5'-end of the 23S rRNA, where it nucleates assembly of the 50S subunit. One of the proteins that surrounds the polypeptide exit tunnel on the outside of the subunit. This is Large ribosomal subunit protein uL24 from Methylorubrum populi (strain ATCC BAA-705 / NCIMB 13946 / BJ001) (Methylobacterium populi).